A 284-amino-acid chain; its full sequence is Diaminopimelate epimerase (284 aa).

Substrate is bound by residues asparagine 20, glutamine 53, and asparagine 73. The active-site Proton donor is the cysteine 82. Residues 83 to 84 (GN), asparagine 167, asparagine 200, and 218 to 219 (ER) contribute to the substrate site. Cysteine 227 serves as the catalytic Proton acceptor. 228-229 (GS) is a binding site for substrate.

It belongs to the diaminopimelate epimerase family. In terms of assembly, homodimer.

The protein resides in the cytoplasm. It catalyses the reaction (2S,6S)-2,6-diaminopimelate = meso-2,6-diaminopimelate. It functions in the pathway amino-acid biosynthesis; L-lysine biosynthesis via DAP pathway; DL-2,6-diaminopimelate from LL-2,6-diaminopimelate: step 1/1. Catalyzes the stereoinversion of LL-2,6-diaminopimelate (L,L-DAP) to meso-diaminopimelate (meso-DAP), a precursor of L-lysine and an essential component of the bacterial peptidoglycan. This Xylella fastidiosa (strain M23) protein is Diaminopimelate epimerase.